The primary structure comprises 199 residues: Protein GrpE (199 aa).

Basic and acidic residues predominate over residues methionine 1–asparagine 24. A disordered region spans residues methionine 1–glutamate 52.

The protein belongs to the GrpE family. As to quaternary structure, homodimer.

It localises to the cytoplasm. Participates actively in the response to hyperosmotic and heat shock by preventing the aggregation of stress-denatured proteins, in association with DnaK and GrpE. It is the nucleotide exchange factor for DnaK and may function as a thermosensor. Unfolded proteins bind initially to DnaJ; upon interaction with the DnaJ-bound protein, DnaK hydrolyzes its bound ATP, resulting in the formation of a stable complex. GrpE releases ADP from DnaK; ATP binding to DnaK triggers the release of the substrate protein, thus completing the reaction cycle. Several rounds of ATP-dependent interactions between DnaJ, DnaK and GrpE are required for fully efficient folding. This is Protein GrpE from Legionella pneumophila (strain Lens).